A 324-amino-acid chain; its full sequence is Mitochondrial oxaloacetate transport protein (324 aa).

3 Solcar repeats span residues 20–111, 126–218, and 227–312; these read ISKF…IRSS, QSVG…AKNI, and DGPA…TMKL. 6 helical membrane passes run 26–46, 79–99, 132–152, 193–213, 233–253, and 284–305; these read FVAG…IELI, GIKG…GLNG, VFSG…LFLV, GIDA…PIYN, LTAS…WDVI, and LYKG…CLTF.

Belongs to the mitochondrial carrier (TC 2.A.29) family.

It is found in the mitochondrion inner membrane. It carries out the reaction a dicarboxylate(in) + sulfate(out) = a dicarboxylate(out) + sulfate(in). The catalysed reaction is (2S)-2-isopropylmalate(in) + sulfate(out) = (2S)-2-isopropylmalate(out) + sulfate(in). The enzyme catalyses (2R,3S)-3-isopropylmalate(in) + sulfate(out) = (2R,3S)-3-isopropylmalate(out) + sulfate(in). It catalyses the reaction malonate(in) + sulfate(out) = malonate(out) + sulfate(in). It carries out the reaction oxaloacetate(in) + sulfate(out) = oxaloacetate(out) + sulfate(in). The catalysed reaction is thiosulfate(in) + sulfate(out) = thiosulfate(out) + sulfate(in). Inhibited by alpha-keto isocaproate, an intermediate of leucine biosynthesis pathway. Its function is as follows. Antiporter that exchanges dicarboxylates and sulfur oxoanions across the inner membrane of mitochondria. Exports alpha-isopropylmalate from mitochondrial matrix to the cytosol, where it serves as a precursor for leucine biosynthesis. This Saccharomyces cerevisiae (strain ATCC 204508 / S288c) (Baker's yeast) protein is Mitochondrial oxaloacetate transport protein (OAC1).